The primary structure comprises 228 residues: MENISIRDMLQAGVHFGHQTRYWNPKMKPFIFGVRNKIHIIDLETTSVMFRQALIELNKIAALKGKILFVGTKRAASESVKKTALACNQFFVNHRWLGGMLTNWKTVRQSIKRLKDLEIQSQDGTFKKLTKKEALILNRELINLENSLGGIKNMGGLPDAIFAVGATHEHIAIKEANSLGIPVFAIVDTNSNPDGIDFVIPGNDDAVRAINLYLNIISNMIHINACNT.

Belongs to the universal ribosomal protein uS2 family.

The sequence is that of Small ribosomal subunit protein uS2 from Blochmanniella pennsylvanica (strain BPEN).